The chain runs to 69 residues: uncharacterized protein (69 aa).

The Cytoplasmic segment spans residues 1-15; it reads MLLYIVIIVACIISK. Residues 16-36 form a helical membrane-spanning segment; that stretch reads LVPNEYWAIHLFFIIMIFMVY. Residues 37–69 are Extracellular-facing; that stretch reads MYEKLDIHQKYQFWNYTMSGLSGHNVQVICKCY. Residue N51 is glycosylated (N-linked (GlcNAc...) asparagine; by host).

The protein belongs to the asfivirus X69R family.

It is found in the host membrane. This is an uncharacterized protein from Ornithodoros (relapsing fever ticks).